A 648-amino-acid chain; its full sequence is Biosynthetic arginine decarboxylase (648 aa).

Residue Lys109 is modified to N6-(pyridoxal phosphate)lysine. Ile291–Phe301 is a substrate binding site.

This sequence belongs to the Orn/Lys/Arg decarboxylase class-II family. SpeA subfamily. It depends on Mg(2+) as a cofactor. Requires pyridoxal 5'-phosphate as cofactor.

It carries out the reaction L-arginine + H(+) = agmatine + CO2. Its pathway is amine and polyamine biosynthesis; agmatine biosynthesis; agmatine from L-arginine: step 1/1. Functionally, catalyzes the biosynthesis of agmatine from arginine. The protein is Biosynthetic arginine decarboxylase of Prochlorococcus marinus (strain MIT 9515).